A 346-amino-acid polypeptide reads, in one-letter code: Nucleoplasmin-like protein ANO39 (346 aa).

S2 carries the post-translational modification N-acetylserine. N85 carries N-linked (GlcNAc...) asparagine glycosylation. The span at D123–E141 shows a compositional bias: acidic residues. The disordered stretch occupies residues D123–L285. S145 is modified (phosphoserine; by CDC2). The span at A171 to K180 shows a compositional bias: basic and acidic residues. Residues E181–S247 show a composition bias toward acidic residues. N264 carries an N-linked (GlcNAc...) asparagine glycan. Residues G271 to L285 show a composition bias toward basic and acidic residues.

The protein belongs to the nucleoplasmin family. Phosphorylation occurs in oocytes during the progression of the first meiotic M phase. No phosphorylation is observed in immature oocytes. In terms of tissue distribution, expressed specifically in the oocytes of the ovaries.

The protein resides in the nucleus. The protein localises to the nucleolus. It is found in the cytoplasm. Functionally, binds double-stranded RNA and both single-stranded and double-stranded DNA. This is Nucleoplasmin-like protein ANO39 from Patiria pectinifera (Starfish).